A 619-amino-acid chain; its full sequence is CREB-regulated transcription coactivator 3 (619 aa).

The interval 1-103 (MAASPGSGSA…LVERPSRNRF (103 aa)) is required for interaction with HTLV-1 TAX. Residues serine 4 and serine 62 each carry the phosphoserine modification. Residues 103–150 (FHPLHRRSGDKPGRQFDGSAFGANYSSQPLDESWPRQQPPWKDEKHPG) form a disordered region. Threonine 160 is subject to Phosphothreonine. Serine 162 is subject to Phosphoserine; by SIK2. The segment covering 165–175 (ALHTSALSTKP) has biased composition (polar residues). Residues 165 to 185 (ALHTSALSTKPQDPYGGGGQS) form a disordered region. A Glycyl lysine isopeptide (Lys-Gly) (interchain with G-Cter in SUMO2) cross-link involves residue lysine 232. Phosphoserine occurs at positions 273, 329, 332, 370, 391, 396, 410, and 443. A disordered region spans residues 375–431 (STTNLSGPSRRRQPPVSPLTLSPGPEAHQGFSRQLSSTSPLAPYPTSQMVSSDRSQL). Positions 380-401 (SGPSRRRQPPVSPLTLSPGPEA) are required for interaction with PPP2CA and PPP2R1A. The span at 405–431 (FSRQLSSTSPLAPYPTSQMVSSDRSQL) shows a compositional bias: polar residues.

The protein belongs to the TORC family. In terms of assembly, binding, as a tetramer, through its N-terminal region, with the bZIP domain of CREB1 enhances recruitment of TAF4 to the promoter. 'Arg-314' in the bZIP domain of CREB1 is essential for this interaction. Interacts (when phosphorylated at Ser-162 and Se-273) with 14-3-3 proteins. Interacts with YWHAE. Interacts (when phosphorylated at Ser-391) with phosphatase PP2A catalytic subunit PPP2CA and regulatory subunits PPP2R1A and PPP2R2A. Interacts, via the N-terminal with the ankyrin repeats of BCL3, to form a complex with CREB1 on CRE and TxRE responsive elements and represses HTLV-1 LTR-mediated transcription. (Microbial infection) Interacts with HTLV-1 protein Tax; this interaction enhances tax transcriptional activity. Phosphorylation/dephosphorylation states of Ser-273 are required for regulating transduction of CREB activity. CRTCs/TORCs are inactive when phosphorylated, and active when dephosphorylated at this site. May be phosphorylated at Ser-391 by MAPK3/ERK1 and/or MAPK1/ERK2 or by some cyclin-dependent kinases such as CDK1,CDK2 or CDK5. Following adenylyl cyclase activation, dephosphorylated at Ser-162 and Ser-273 resulting in its dissociation from 14-3-3 proteins probably promoting CRTC3 translocation into the nucleus. As to expression, predominantly expressed in B and T lymphocytes. Highest levels in lung. Also expressed in brain, colon, heart, kidney, ovary, and prostate. Weak expression in liver, pancreas, muscle, small intestine, spleen and stomach.

Its subcellular location is the nucleus. It is found in the cytoplasm. In terms of biological role, transcriptional coactivator for CREB1 which activates transcription through both consensus and variant cAMP response element (CRE) sites. Acts as a coactivator, in the SIK/TORC signaling pathway, being active when dephosphorylated and acts independently of CREB1 'Ser-133' phosphorylation. Enhances the interaction of CREB1 with TAF4. Regulates the expression of specific CREB-activated genes such as the steroidogenic gene, StAR. Potent coactivator of PPARGC1A and inducer of mitochondrial biogenesis in muscle cells. Also coactivator for TAX activation of the human T-cell leukemia virus type 1 (HTLV-1) long terminal repeats (LTR). The chain is CREB-regulated transcription coactivator 3 (CRTC3) from Homo sapiens (Human).